The chain runs to 389 residues: 1-deoxy-D-xylulose 5-phosphate reductoisomerase (389 aa).

NADPH-binding residues include serine 11, glycine 12, serine 13, valine 14, asparagine 39, and asparagine 122. Lysine 123 serves as a coordination point for 1-deoxy-D-xylulose 5-phosphate. Glutamate 124 is a binding site for NADPH. Aspartate 148 lines the Mn(2+) pocket. Residues serine 149, glutamate 150, serine 174, and histidine 197 each coordinate 1-deoxy-D-xylulose 5-phosphate. Glutamate 150 contributes to the Mn(2+) binding site. Glycine 203 provides a ligand contact to NADPH. Residues serine 210, asparagine 215, lysine 216, and glutamate 219 each contribute to the 1-deoxy-D-xylulose 5-phosphate site. A Mn(2+)-binding site is contributed by glutamate 219.

It belongs to the DXR family. Mg(2+) serves as cofactor. The cofactor is Mn(2+).

It catalyses the reaction 2-C-methyl-D-erythritol 4-phosphate + NADP(+) = 1-deoxy-D-xylulose 5-phosphate + NADPH + H(+). The protein operates within isoprenoid biosynthesis; isopentenyl diphosphate biosynthesis via DXP pathway; isopentenyl diphosphate from 1-deoxy-D-xylulose 5-phosphate: step 1/6. Catalyzes the NADPH-dependent rearrangement and reduction of 1-deoxy-D-xylulose-5-phosphate (DXP) to 2-C-methyl-D-erythritol 4-phosphate (MEP). This Leptospira borgpetersenii serovar Hardjo-bovis (strain JB197) protein is 1-deoxy-D-xylulose 5-phosphate reductoisomerase.